We begin with the raw amino-acid sequence, 326 residues long: Elongation factor Ts (326 aa).

The segment at T80–V83 is involved in Mg(2+) ion dislocation from EF-Tu.

The protein belongs to the EF-Ts family.

Its subcellular location is the cytoplasm. Associates with the EF-Tu.GDP complex and induces the exchange of GDP to GTP. It remains bound to the aminoacyl-tRNA.EF-Tu.GTP complex up to the GTP hydrolysis stage on the ribosome. In Rhodopirellula baltica (strain DSM 10527 / NCIMB 13988 / SH1), this protein is Elongation factor Ts.